A 551-amino-acid polypeptide reads, in one-letter code: Formate--tetrahydrofolate ligase (551 aa).

61 to 68 (TPAGEGKS) lines the ATP pocket.

It belongs to the formate--tetrahydrofolate ligase family.

It carries out the reaction (6S)-5,6,7,8-tetrahydrofolate + formate + ATP = (6R)-10-formyltetrahydrofolate + ADP + phosphate. It functions in the pathway one-carbon metabolism; tetrahydrofolate interconversion. The protein is Formate--tetrahydrofolate ligase of Lactiplantibacillus plantarum (strain ATCC BAA-793 / NCIMB 8826 / WCFS1) (Lactobacillus plantarum).